We begin with the raw amino-acid sequence, 212 residues long: Methylthioribulose-1-phosphate dehydratase (212 aa).

2 residues coordinate Zn(2+): H103 and H105.

The protein belongs to the aldolase class II family. MtnB subfamily. The cofactor is Zn(2+).

It carries out the reaction 5-(methylsulfanyl)-D-ribulose 1-phosphate = 5-methylsulfanyl-2,3-dioxopentyl phosphate + H2O. It participates in amino-acid biosynthesis; L-methionine biosynthesis via salvage pathway; L-methionine from S-methyl-5-thio-alpha-D-ribose 1-phosphate: step 2/6. Functionally, catalyzes the dehydration of methylthioribulose-1-phosphate (MTRu-1-P) into 2,3-diketo-5-methylthiopentyl-1-phosphate (DK-MTP-1-P). The sequence is that of Methylthioribulose-1-phosphate dehydratase from Sorangium cellulosum (strain So ce56) (Polyangium cellulosum (strain So ce56)).